The primary structure comprises 145 residues: Copper transporter 6 (145 aa).

The next 2 helical transmembrane spans lie at 47–67 (LGMY…VEWL) and 99–119 (YLVM…AIAG).

Belongs to the copper transporter (Ctr) (TC 1.A.56) family. SLC31A subfamily.

It is found in the membrane. Involved in the transport of copper. This Arabidopsis thaliana (Mouse-ear cress) protein is Copper transporter 6 (COPT6).